The primary structure comprises 232 residues: uncharacterized protein (232 aa).

The protein resides in the cytoplasm. Its subcellular location is the nucleus. This is an uncharacterized protein from Saccharomyces cerevisiae (strain ATCC 204508 / S288c) (Baker's yeast).